Here is a 209-residue protein sequence, read N- to C-terminus: Eukaryotic translation initiation factor isoform 4E-2 (209 aa).

The disordered stretch occupies residues methionine 1–alanine 29. Over residues proline 9–alanine 29 the composition is skewed to low complexity. Residues proline 51 to glycine 56, lysine 83, and tryptophan 101 to glutamate 102 contribute to the mRNA site. A disulfide bridge connects residues cysteine 106 and cysteine 145. MRNA contacts are provided by residues arginine 152–lysine 157 and arginine 197–lysine 200.

The protein belongs to the eukaryotic initiation factor 4E family. In terms of assembly, EIF4F is a multi-subunit complex, the composition of which varies with external and internal environmental conditions. It is composed of at least EIF4A, EIF4E and EIF4G. EIF4E is also known to interact with other partners. In higher plants two isoforms of EIF4F have been identified, named isoform EIF4F and isoform EIF(iso)4F. Isoform EIF4F has subunits p220 and p26, whereas isoform EIF(iso)4F has subunits p82 and p28. According to the redox status, the Cys-106-Cys-145 disulfide bridge may have a role in regulating protein function by affecting its ability to bind capped mRNA.

It is found in the cytoplasm. The protein resides in the nucleus. In terms of biological role, component of the protein complex eIF4F, which is involved in the recognition of the mRNA cap, ATP-dependent unwinding of 5'-terminal secondary structure and recruitment of mRNA to the ribosome. Recognizes and binds the 7-methylguanosine-containing mRNA cap during an early step in the initiation of protein synthesis and facilitates ribosome binding by inducing the unwinding of the mRNAs secondary structures. The polypeptide is Eukaryotic translation initiation factor isoform 4E-2 (Triticum aestivum (Wheat)).